A 220-amino-acid polypeptide reads, in one-letter code: Small ribosomal subunit protein uS3 (220 aa).

Residues I38–R106 enclose the KH type-2 domain.

It belongs to the universal ribosomal protein uS3 family. In terms of assembly, part of the 30S ribosomal subunit. Forms a tight complex with proteins S10 and S14.

In terms of biological role, binds the lower part of the 30S subunit head. Binds mRNA in the 70S ribosome, positioning it for translation. The polypeptide is Small ribosomal subunit protein uS3 (Myxococcus xanthus (strain DK1622)).